The chain runs to 372 residues: N-methyl-L-tryptophan oxidase (372 aa).

FAD is bound at residue 4–34; it reads DLIIIGSGSVGAAAGYYATRAGLKVLMTDAH. Residue cysteine 307 is modified to S-8alpha-FAD cysteine.

This sequence belongs to the MSOX/MTOX family. MTOX subfamily. As to quaternary structure, monomer. Requires FAD as cofactor.

The catalysed reaction is N(alpha)-methyl-L-tryptophan + O2 + H2O = L-tryptophan + formaldehyde + H2O2. In terms of biological role, catalyzes the oxidative demethylation of N-methyl-L-tryptophan. In Salmonella dublin (strain CT_02021853), this protein is N-methyl-L-tryptophan oxidase.